Consider the following 157-residue polypeptide: 2-C-methyl-D-erythritol 2,4-cyclodiphosphate synthase (157 aa).

Asp8 and His10 together coordinate a divalent metal cation. 4-CDP-2-C-methyl-D-erythritol 2-phosphate is bound by residues 8–10 and 34–35; these read DVH and HS. Residue His42 participates in a divalent metal cation binding. Residues 56-58, 61-65, 100-106, 132-135, Phe139, and Arg142 each bind 4-CDP-2-C-methyl-D-erythritol 2-phosphate; these read DIG, FPDTD, AQAPKMA, and TTTE.

It belongs to the IspF family. As to quaternary structure, homotrimer. Requires a divalent metal cation as cofactor.

The catalysed reaction is 4-CDP-2-C-methyl-D-erythritol 2-phosphate = 2-C-methyl-D-erythritol 2,4-cyclic diphosphate + CMP. The protein operates within isoprenoid biosynthesis; isopentenyl diphosphate biosynthesis via DXP pathway; isopentenyl diphosphate from 1-deoxy-D-xylulose 5-phosphate: step 4/6. In terms of biological role, involved in the biosynthesis of isopentenyl diphosphate (IPP) and dimethylallyl diphosphate (DMAPP), two major building blocks of isoprenoid compounds. Catalyzes the conversion of 4-diphosphocytidyl-2-C-methyl-D-erythritol 2-phosphate (CDP-ME2P) to 2-C-methyl-D-erythritol 2,4-cyclodiphosphate (ME-CPP) with a corresponding release of cytidine 5-monophosphate (CMP). This chain is 2-C-methyl-D-erythritol 2,4-cyclodiphosphate synthase, found in Pseudomonas aeruginosa (strain UCBPP-PA14).